The chain runs to 210 residues: Protein GrpE (210 aa).

Belongs to the GrpE family. Homodimer.

The protein resides in the cytoplasm. In terms of biological role, participates actively in the response to hyperosmotic and heat shock by preventing the aggregation of stress-denatured proteins, in association with DnaK and GrpE. It is the nucleotide exchange factor for DnaK and may function as a thermosensor. Unfolded proteins bind initially to DnaJ; upon interaction with the DnaJ-bound protein, DnaK hydrolyzes its bound ATP, resulting in the formation of a stable complex. GrpE releases ADP from DnaK; ATP binding to DnaK triggers the release of the substrate protein, thus completing the reaction cycle. Several rounds of ATP-dependent interactions between DnaJ, DnaK and GrpE are required for fully efficient folding. The protein is Protein GrpE of Rhizobium leguminosarum bv. trifolii (strain WSM2304).